Reading from the N-terminus, the 539-residue chain is Tripartite motif-containing protein 26 (539 aa).

The segment at 16 to 57 (CSICLDYLRDPVTIDCGHVFCRSCTTDVRPISGSRPVCPLCK) adopts an RING-type zinc-finger fold. The segment at 97–138 (QDAKLCERHREKLHYYCEDDGKLLCVMCRESREHRPHTAVLM) adopts a B box-type zinc-finger fold. Zn(2+) contacts are provided by Cys102, His105, Cys124, and His130. A coiled-coil region spans residues 188–227 (IVAEFEQGHQFLREREEHLLEQLAKLEQELTEGREKFKSR). In terms of domain architecture, B30.2/SPRY spans 295–539 (RGLREFQGKL…WPGTRLLLRP (245 aa)). The segment at 376 to 437 (REGWSEDEEE…EEEEEVLESC (62 aa)) is disordered. A compositionally biased stretch (acidic residues) spans 380–434 (SEDEEEGDEEEEGEEEEEEEEAGYGDGYDDWETDEDEESLGDEEEEEEEEEEEVL).

It belongs to the TRIM/RBCC family. Interacts with TBK1; this interaction bridges together TBK1 and NEMO in order to activate TBK1. Interacts with INCA1. Autoubiquitinates upon viral infection. In turn, autoubiquitinated TRIM26 recruits NEMO and bridges TBK1-NEMO interaction.

Its subcellular location is the cytoplasm. The protein resides in the nucleus. The enzyme catalyses S-ubiquitinyl-[E2 ubiquitin-conjugating enzyme]-L-cysteine + [acceptor protein]-L-lysine = [E2 ubiquitin-conjugating enzyme]-L-cysteine + N(6)-ubiquitinyl-[acceptor protein]-L-lysine.. In terms of biological role, E3 ubiquitin-protein ligase which regulates the IFN-beta production and antiviral response downstream of various DNA-encoded pattern-recognition receptors (PRRs). Also plays a central role in determining the response to different forms of oxidative stress by controlling levels of DNA glycosylases NEIL1, NEIL3 and NTH1 that are involved in repair of damaged DNA. Promotes nuclear IRF3 ubiquitination and proteasomal degradation. Bridges together TBK1 and NEMO during the innate response to viral infection leading to the activation of TBK1. Positively regulates LPS-mediated inflammatory innate immune response by catalyzing the 'Lys-11'-linked polyubiquitination of TAB1 to enhance its activation and subsequent NF-kappa-B and MAPK signaling. In a manner independent of its catalytic activity, inhibits WWP2, a SOX2-directed E3 ubiquitin ligase, and thus protects SOX2 from polyubiquitination and proteasomal degradation. Ubiquitinates the histone acetyltransferase protein complex component PHF20 and thereby triggers its degradation in the nucleus after its recruitment by the histone demethylase KDM6B, serving as a scaffold protein. Upon induction by TGF-beta, ubiquitinates the TFIID component TAF7 for proteasomal degradation. Induces ferroptosis by ubiquitinating SLC7A11, a critical protein for lipid reactive oxygen species (ROS) scavenging. The chain is Tripartite motif-containing protein 26 (TRIM26) from Pan troglodytes (Chimpanzee).